A 228-amino-acid polypeptide reads, in one-letter code: NAD(P)H-hydrate epimerase (228 aa).

A YjeF N-terminal domain is found at 9 to 209; the sequence is VRAVERLAHR…LLGLTPAFLA (201 aa). Position 53–57 (53–57) interacts with (6S)-NADPHX; the sequence is NNGGD. K(+)-binding residues include asparagine 54 and aspartate 115. Residues 119–125 and aspartate 148 contribute to the (6S)-NADPHX site; that span reads GIGLARP. Serine 151 is a binding site for K(+).

Belongs to the NnrE/AIBP family. Requires K(+) as cofactor.

It carries out the reaction (6R)-NADHX = (6S)-NADHX. The catalysed reaction is (6R)-NADPHX = (6S)-NADPHX. Functionally, catalyzes the epimerization of the S- and R-forms of NAD(P)HX, a damaged form of NAD(P)H that is a result of enzymatic or heat-dependent hydration. This is a prerequisite for the S-specific NAD(P)H-hydrate dehydratase to allow the repair of both epimers of NAD(P)HX. In Bordetella parapertussis (strain 12822 / ATCC BAA-587 / NCTC 13253), this protein is NAD(P)H-hydrate epimerase.